A 442-amino-acid chain; its full sequence is Lysosomal dipeptide transporter MFSD1 (442 aa).

Residues 8–9 (LL) carry the Dileucine internalization motif motif. 10 helical membrane-spanning segments follow: residues 38–58 (LLVL…YDNP), 85–105 (TVIF…GALV), 107–127 (AFWL…SLAV), 187–207 (LLIG…LAYL), 238–258 (LWLI…FIGL), 276–296 (AINS…GILV), 303–323 (IIWV…LAFT), 333–353 (LLGV…AFVV), 364–384 (FMQS…GMIL), and 390–410 (LFLE…VVML).

The protein belongs to the major facilitator superfamily. In terms of assembly, homodimer. Interacts with lysosomal protein GLMP (via lumenal domain); the interaction starts while both proteins are still in the endoplasmic reticulum and is required for stabilization of MFSD1 in lysosomes but has no direct effect on its targeting to lysosomes or transporter activity.

The protein localises to the lysosome membrane. The catalysed reaction is L-alpha-aminoacyl-L-arginine(out) = L-alpha-aminoacyl-L-arginine(in). It carries out the reaction L-arginyl-L-alpha-amino acid(out) = L-arginyl-L-alpha-amino acid(in). The enzyme catalyses L-arginyl-glycine(out) = L-arginyl-glycine(in). It catalyses the reaction L-alpha-aminoacyl-L-lysine(out) = L-alpha-aminoacyl-L-lysine(in). The catalysed reaction is L-aspartyl-L-lysine(out) = L-aspartyl-L-lysine(in). It carries out the reaction L-alanyl-L-lysine(out) = L-alanyl-L-lysine(in). The enzyme catalyses L-lysyl-L-alpha-amino acid(out) = L-lysyl-L-alpha-amino acid(in). It catalyses the reaction L-lysyl-L-alanine(out) = L-lysyl-L-alanine(in). The catalysed reaction is L-lysyl-L-lysine(out) = L-lysyl-L-lysine(in). It carries out the reaction L-lysyl-glycine(out) = L-lysyl-glycine(in). The enzyme catalyses L-alpha-aminoacyl-L-histidine(out) = L-alpha-aminoacyl-L-histidine(in). It catalyses the reaction L-histidyl-L-alpha-amino acid(out) = L-histidyl-L-alpha-amino acid(in). The catalysed reaction is L-histidyl-glycine(out) = L-histidyl-glycine(in). Functionally, lysosomal dipeptide uniporter that selectively exports lysine, arginine or histidine-containing dipeptides with a net positive charge from the lysosome lumen into the cytosol. Could play a role in a specific type of protein O-glycosylation indirectly regulating macrophages migration and tissue invasion. Also essential for liver homeostasis. In Gallus gallus (Chicken), this protein is Lysosomal dipeptide transporter MFSD1.